The primary structure comprises 63 residues: Cytotoxin homolog S3C2 (63 aa).

Disulfide bonds link C3–C22, C15–C40, C44–C55, and C56–C61.

Belongs to the three-finger toxin family. Short-chain subfamily. Orphan group XVI sub-subfamily. Expressed by the venom gland.

It is found in the secreted. The sequence is that of Cytotoxin homolog S3C2 from Aspidelaps scutatus (Shield-nose snake).